Here is a 305-residue protein sequence, read N- to C-terminus: Phosphatidate cytidylyltransferase (305 aa).

Transmembrane regions (helical) follow at residues Phe-27–Leu-47, Phe-67–Cys-87, Phe-96–Val-116, Leu-124–Ile-144, Ile-150–Leu-170, Thr-202–Ser-222, Ile-232–Gly-252, and Met-277–Ile-297.

Belongs to the CDS family.

Its subcellular location is the cell membrane. The enzyme catalyses a 1,2-diacyl-sn-glycero-3-phosphate + CTP + H(+) = a CDP-1,2-diacyl-sn-glycerol + diphosphate. Its pathway is phospholipid metabolism; CDP-diacylglycerol biosynthesis; CDP-diacylglycerol from sn-glycerol 3-phosphate: step 3/3. This is Phosphatidate cytidylyltransferase (cdsA) from Chlamydia trachomatis serovar D (strain ATCC VR-885 / DSM 19411 / UW-3/Cx).